The sequence spans 102 residues: Small ribosomal subunit protein uS14m (102 aa).

Belongs to the universal ribosomal protein uS14 family.

It localises to the mitochondrion. The chain is Small ribosomal subunit protein uS14m (RPS14) from Paramecium tetraurelia.